A 24-amino-acid chain; its full sequence is Large ribosomal subunit protein uL30 (24 aa).

The protein belongs to the universal ribosomal protein uL30 family. In terms of assembly, part of the 50S ribosomal subunit.

This Ectopseudomonas mendocina (Pseudomonas mendocina) protein is Large ribosomal subunit protein uL30 (rpmD).